The chain runs to 314 residues: Zinc-binding alcohol dehydrogenase domain-containing protein cipB (314 aa).

Belongs to the zinc-containing alcohol dehydrogenase family.

Involved in osmoadaptation. The polypeptide is Zinc-binding alcohol dehydrogenase domain-containing protein cipB (cipB) (Emericella nidulans (strain FGSC A4 / ATCC 38163 / CBS 112.46 / NRRL 194 / M139) (Aspergillus nidulans)).